The sequence spans 177 residues: Isopentenyl-diphosphate Delta-isomerase (177 aa).

2 residues coordinate Mn(2+): His22 and His28. Positions 26–160 constitute a Nudix hydrolase domain; that stretch reads LRHKAISVFV…PERFTPWLRI (135 aa). Cys62 is a catalytic residue. His64 lines the Mn(2+) pocket. Glu82 is a binding site for Mg(2+). Mn(2+) contacts are provided by Glu108 and Glu110. The active site involves Glu110.

This sequence belongs to the IPP isomerase type 1 family. Mg(2+) is required as a cofactor. Requires Mn(2+) as cofactor.

Its subcellular location is the cytoplasm. The catalysed reaction is isopentenyl diphosphate = dimethylallyl diphosphate. It participates in isoprenoid biosynthesis; dimethylallyl diphosphate biosynthesis; dimethylallyl diphosphate from isopentenyl diphosphate: step 1/1. Its pathway is porphyrin-containing compound metabolism; chlorophyll biosynthesis. Catalyzes the 1,3-allylic rearrangement of the homoallylic substrate isopentenyl (IPP) to its highly electrophilic allylic isomer, dimethylallyl diphosphate (DMAPP). This Cereibacter sphaeroides (strain ATCC 17025 / ATH 2.4.3) (Rhodobacter sphaeroides) protein is Isopentenyl-diphosphate Delta-isomerase.